The following is a 263-amino-acid chain: 3'-5' ssDNA/RNA exonuclease TatD (263 aa).

The a divalent metal cation site is built by E91, H127, and H152.

It belongs to the metallo-dependent hydrolases superfamily. TatD-type hydrolase family. TatD subfamily. Monomer. Requires Mg(2+) as cofactor.

Its subcellular location is the cytoplasm. In terms of biological role, 3'-5' exonuclease that prefers single-stranded DNA and RNA. May play a role in the H(2)O(2)-induced DNA damage repair. This Cronobacter turicensis (strain DSM 18703 / CCUG 55852 / LMG 23827 / z3032) protein is 3'-5' ssDNA/RNA exonuclease TatD.